A 472-amino-acid polypeptide reads, in one-letter code: Uronate isomerase (472 aa).

Belongs to the metallo-dependent hydrolases superfamily. Uronate isomerase family.

It carries out the reaction D-glucuronate = D-fructuronate. The enzyme catalyses aldehydo-D-galacturonate = keto-D-tagaturonate. It participates in carbohydrate metabolism; pentose and glucuronate interconversion. This is Uronate isomerase from Lactococcus lactis subsp. cremoris (strain MG1363).